Consider the following 157-residue polypeptide: uncharacterized protein (157 aa).

Positions 6–157 (HDELFQAIQQ…AFFNLWIKYM (152 aa)) constitute an HTH marR-type domain. The segment at residues 66-89 (NSFLASRLHISKAAVSKAVHALLK) is a DNA-binding region (H-T-H motif).

Its subcellular location is the cytoplasm. This is an uncharacterized protein from Bacillus subtilis (strain 168).